The following is a 353-amino-acid chain: Uroporphyrinogen decarboxylase (353 aa).

Substrate-binding positions include 28–32 (RQAGR), D78, Y155, S210, and H325.

The protein belongs to the uroporphyrinogen decarboxylase family. In terms of assembly, homodimer.

Its subcellular location is the cytoplasm. The catalysed reaction is uroporphyrinogen III + 4 H(+) = coproporphyrinogen III + 4 CO2. It functions in the pathway porphyrin-containing compound metabolism; protoporphyrin-IX biosynthesis; coproporphyrinogen-III from 5-aminolevulinate: step 4/4. Catalyzes the decarboxylation of four acetate groups of uroporphyrinogen-III to yield coproporphyrinogen-III. The polypeptide is Uroporphyrinogen decarboxylase (Nostoc punctiforme (strain ATCC 29133 / PCC 73102)).